The chain runs to 265 residues: 4-hydroxy-2-oxo-heptane-1,7-dioate aldolase (265 aa).

The active-site Proton acceptor is H45. Substrate is bound at residue Q147. E149 contributes to the a divalent metal cation binding site. Substrate is bound by residues A174 and D175. An a divalent metal cation-binding site is contributed by D175.

This sequence belongs to the HpcH/HpaI aldolase family. In terms of assembly, homohexamer; trimer of dimers. A divalent metal cation is required as a cofactor.

It carries out the reaction 4-hydroxy-2-oxoheptanedioate = succinate semialdehyde + pyruvate. Its pathway is aromatic compound metabolism; 4-hydroxyphenylacetate degradation; pyruvate and succinate semialdehyde from 4-hydroxyphenylacetate: step 7/7. In terms of biological role, catalyzes the reversible retro-aldol cleavage of 4-hydroxy-2-ketoheptane-1,7-dioate (HKHD) to pyruvate and succinic semialdehyde. The polypeptide is 4-hydroxy-2-oxo-heptane-1,7-dioate aldolase (Klebsiella pneumoniae subsp. pneumoniae (strain ATCC 700721 / MGH 78578)).